Reading from the N-terminus, the 281-residue chain is Homoserine kinase (281 aa).

Residue 83–93 coordinates ATP; it reads PVSSGLGSSAA.

Belongs to the GHMP kinase family. Homoserine kinase subfamily.

It localises to the cytoplasm. The enzyme catalyses L-homoserine + ATP = O-phospho-L-homoserine + ADP + H(+). The protein operates within amino-acid biosynthesis; L-threonine biosynthesis; L-threonine from L-aspartate: step 4/5. Catalyzes the ATP-dependent phosphorylation of L-homoserine to L-homoserine phosphate. The chain is Homoserine kinase from Thermotoga petrophila (strain ATCC BAA-488 / DSM 13995 / JCM 10881 / RKU-1).